The following is a 207-amino-acid chain: Glutathione S-transferase 3 (207 aa).

Residues 2–79 (VHYKLTYFNA…YLARKFGFVG (78 aa)) enclose the GST N-terminal domain. Glutathione contacts are provided by residues Tyr8, Lys43, 49 to 51 (GQV), and 63 to 64 (QS). The 127-residue stretch at 81–207 (TAEEELQADE…WLAKRPETRF (127 aa)) folds into the GST C-terminal domain.

It belongs to the GST superfamily. Sigma family.

The catalysed reaction is RX + glutathione = an S-substituted glutathione + a halide anion + H(+). Functionally, conjugation of reduced glutathione to a wide number of exogenous and endogenous hydrophobic electrophiles. This chain is Glutathione S-transferase 3 (gst-3), found in Caenorhabditis elegans.